Here is a 644-residue protein sequence, read N- to C-terminus: Probable potassium transport system protein Kup 2 (644 aa).

A disordered region spans residues 1 to 21; it reads MSSDAAAVADRDGSSPGHGGH. 12 helical membrane-spanning segments follow: residues 26–46, 69–89, 120–140, 155–175, 183–203, 231–251, 265–285, 312–332, 360–380, 390–410, 419–439, and 444–464; these read LGAM…TSPL, VLSL…VAII, IILL…ITPA, AGFA…LFMI, VGML…VLGT, LAFL…ALYA, WLVF…AMIL, LVIL…TGAF, IYIP…VMSF, YGIA…VVLI, LAAP…GANL, and DGGW…TTWG.

It belongs to the HAK/KUP transporter (TC 2.A.72) family.

The protein resides in the cell inner membrane. The enzyme catalyses K(+)(in) + H(+)(in) = K(+)(out) + H(+)(out). Its function is as follows. Transport of potassium into the cell. Likely operates as a K(+):H(+) symporter. The sequence is that of Probable potassium transport system protein Kup 2 from Rhizorhabdus wittichii (strain DSM 6014 / CCUG 31198 / JCM 15750 / NBRC 105917 / EY 4224 / RW1) (Sphingomonas wittichii).